A 1306-amino-acid polypeptide reads, in one-letter code: Activating transcription factor 7-interacting protein 1 (1306 aa).

Met1 is modified (N-acetylmethionine). The tract at residues 1 to 23 is disordered; sequence MDSVEEPQKKVFKARKTMRASDR. Residue Lys33 forms a Glycyl lysine isopeptide (Lys-Gly) (interchain with G-Cter in SUMO2) linkage. Ser57 and Ser112 each carry phosphoserine. Disordered stretches follow at residues 104-470, 496-604, 689-722, 765-785, 871-895, 920-1060, and 1152-1196; these read EDLN…SMET, LPVE…SKRR, AAKD…NNMT, VVSS…PAAP, PLPN…NSST, RTSL…GPSQ, and AGPQ…STSL. Composition is skewed to polar residues over residues 109-134 and 143-162; these read EALS…SPAS and VSDN…SDNP. The residue at position 124 (Thr124) is a Phosphothreonine. Composition is skewed to low complexity over residues 185 to 212, 246 to 261, and 284 to 303; these read EEPP…CSEP, EAAS…ASDE, and PSGD…LPRS. Residues 432–441 show a composition bias toward basic and acidic residues; sequence QSEKDEHKSP. A phosphoserine mark is found at Ser511, Ser514, Ser516, and Ser533. The span at 513–523 shows a compositional bias: polar residues; sequence GSPSKQESSEN. 3 stretches are compositionally biased toward basic and acidic residues: residues 557-566, 592-601, and 689-699; these read EGEKSEKDGK, KSEDMDSVES, and AAKDDLKKRQE. Residues 587-605 carry the Nuclear localization signal motif; the sequence is RRKRSKSEDMDSVESKRRR. Lys592 is covalently cross-linked (Glycyl lysine isopeptide (Lys-Gly) (interchain with G-Cter in SUMO2)). Ser593 bears the Phosphoserine mark. Residues 596 to 851 are interaction with SETDB1; the sequence is MDSVESKRRR…NQPSGNVEFI (256 aa). The stretch at 666–696 forms a coiled coil; that stretch reads NKRHKAVLTELQAKIARLTKRFGAAKDDLKK. Phosphoserine occurs at positions 700 and 707. The segment covering 713-722 has biased composition (polar residues); sequence NDTNSNNNMT. Residues 871 to 884 show a composition bias toward pro residues; it reads PLPNPTKPNIPSVP. Ser933 is subject to Phosphoserine. Glycyl lysine isopeptide (Lys-Gly) (interchain with G-Cter in SUMO2) cross-links involve residues Lys944 and Lys974. Residues 948–981 are compositionally biased toward polar residues; that stretch reads STFSPPSSAEQNSSATPRIVTENQTNKTVDSSIN. Positions 987 to 1000 are enriched in low complexity; sequence STSQSGKASSSDSS. The interval 1001 to 1011 is interaction with SUMO; it reads GVIDLTMDDEE. Over residues 1022 to 1040 the composition is skewed to low complexity; sequence SPPSSSTVSTSQPMSRPLQ. Positions 1054–1143 constitute a Fibronectin type-III 1 domain; the sequence is PTSGPSQATI…RVPQTTTYVV (90 aa). Residues 1170-1187 are compositionally biased toward pro residues; it reads PRPLHPAPLPEAPQPQRL. The interaction with MBD1 stretch occupies residues 1190 to 1306; it reads EAASTSLPQK…TDVISSSQNS (117 aa). A Fibronectin type-III 2 domain is found at 1196 to 1302; the sequence is LPQKPHLKLA…DPQSTDVISS (107 aa).

It belongs to the MCAF family. In terms of assembly, interacts with MBD1; the interaction is enhanced when MBD1 is sumoylated. Interacts with SETDB1; the interaction protects SETDB1 from proteasomal degradation and is required to stimulate histone methyltransferase activity and facilitate the conversion of dimethylated to trimethylated H3 'Lys-9'. Interacts with SUMO ubiquitin-like proteins (SUMO1, SUNO2 and SUMO3), with a preference for SUMO2 and SUMO3. Interacts with SP1, ATF7 and ZHX1. Interacts with the general transcription machinery, including ERCC2, ERCC3, GTF2E1, GTF2E2 and POLR2A. As to expression, ubiquitously expressed at all stages studied.

The protein localises to the nucleus. Recruiter that couples transcriptional factors to general transcription apparatus and thereby modulates transcription regulation and chromatin formation. Can both act as an activator or a repressor depending on the context. Required for HUSH-mediated heterochromatin formation and gene silencing. Mediates MBD1-dependent transcriptional repression, probably by recruiting complexes containing SETDB1. Stabilizes SETDB1, is required to stimulate histone methyltransferase activity of SETDB1 and facilitates the conversion of dimethylated to trimethylated H3 'Lys-9' (H3K9me3). The complex formed with MBD1 and SETDB1 represses transcription and couples DNA methylation and histone H3 'Lys-9' trimethylation (H3K9me3). Facilitates telomerase TERT and TERC gene expression by SP1 in cancer cells. This Mus musculus (Mouse) protein is Activating transcription factor 7-interacting protein 1 (Atf7ip).